The primary structure comprises 251 residues: Precorrin-4 C(11)-methyltransferase (251 aa).

This sequence belongs to the precorrin methyltransferase family.

It carries out the reaction precorrin-4 + S-adenosyl-L-methionine = precorrin-5 + S-adenosyl-L-homocysteine. It participates in cofactor biosynthesis; adenosylcobalamin biosynthesis; cob(II)yrinate a,c-diamide from precorrin-2 (aerobic route): step 4/10. Its function is as follows. Catalyzes the methylation of C-11 in precorrin-4 to form precorrin-5. This Mycobacterium tuberculosis (strain CDC 1551 / Oshkosh) protein is Precorrin-4 C(11)-methyltransferase (cobM).